The sequence spans 106 residues: MIITTTPTIDGHQITEYKGLVFGEVVSGANFIRDFFASITDVIGGRSGAYESKLNSARQEALAELEKEAKRVGANALVGVSMEYQSMGGDKGMFIVVATGTAVVIR.

Belongs to the UPF0145 family.

This chain is UPF0145 protein APJL_0492, found in Actinobacillus pleuropneumoniae serotype 3 (strain JL03).